Here is a 304-residue protein sequence, read N- to C-terminus: Ribonuclease Z (304 aa).

Zn(2+)-binding residues include H63, H65, D67, H68, H141, D208, and H266. D67 acts as the Proton acceptor in catalysis.

It belongs to the RNase Z family. Homodimer. Requires Zn(2+) as cofactor.

It catalyses the reaction Endonucleolytic cleavage of RNA, removing extra 3' nucleotides from tRNA precursor, generating 3' termini of tRNAs. A 3'-hydroxy group is left at the tRNA terminus and a 5'-phosphoryl group is left at the trailer molecule.. Zinc phosphodiesterase, which displays some tRNA 3'-processing endonuclease activity. Probably involved in tRNA maturation, by removing a 3'-trailer from precursor tRNA. In Chlamydia trachomatis serovar D (strain ATCC VR-885 / DSM 19411 / UW-3/Cx), this protein is Ribonuclease Z.